A 99-amino-acid chain; its full sequence is Malonate decarboxylase acyl carrier protein (99 aa).

O-(phosphoribosyl dephospho-coenzyme A)serine is present on serine 25.

It belongs to the MdcC family. Post-translationally, covalently binds the prosthetic group of malonate decarboxylase.

It localises to the cytoplasm. In terms of biological role, subunit of malonate decarboxylase, it is an acyl carrier protein to which acetyl and malonyl thioester residues are bound via a 2'-(5''-phosphoribosyl)-3'-dephospho-CoA prosthetic group and turn over during the catalytic mechanism. This Pseudomonas aeruginosa (strain LESB58) protein is Malonate decarboxylase acyl carrier protein.